The primary structure comprises 104 residues: Large ribosomal subunit protein bL21 (104 aa).

This sequence belongs to the bacterial ribosomal protein bL21 family. In terms of assembly, part of the 50S ribosomal subunit. Contacts protein L20.

This protein binds to 23S rRNA in the presence of protein L20. The polypeptide is Large ribosomal subunit protein bL21 (Helicobacter pylori (strain G27)).